A 202-amino-acid chain; its full sequence is Regulator of G-protein signaling 16 (202 aa).

S-palmitoyl cysteine attachment occurs at residues Cys2 and Cys12. Residues 65-181 form the RGS domain; the sequence is SFDLLLSSKN…LKSPAYRDLA (117 aa). The residue at position 168 (Tyr168) is a Phosphotyrosine; by EGFR. Residue Tyr177 is modified to Phosphotyrosine.

In terms of assembly, interacts with GNAI1 and GNAQ. Interacts with GNAI2, GNAI3 and GNAO1. Post-translationally, palmitoylated on Cys-2 and/or Cys-12. Phosphorylated. Phosphorylation at Tyr-168 by EGFR enhances GTPase accelerating (GAP) activity toward GNAI1. In terms of tissue distribution, abundantly expressed in retina with lower levels of expression in most other tissues.

Its subcellular location is the membrane. Its function is as follows. Regulates G protein-coupled receptor signaling cascades. Inhibits signal transduction by increasing the GTPase activity of G protein alpha subunits, thereby driving them into their inactive GDP-bound form. Plays an important role in the phototransduction cascade by regulating the lifetime and effective concentration of activated transducin alpha. May regulate extra and intracellular mitogenic signals. The polypeptide is Regulator of G-protein signaling 16 (RGS16) (Homo sapiens (Human)).